An 89-amino-acid polypeptide reads, in one-letter code: Small ribosomal subunit protein bS18 (89 aa).

The protein belongs to the bacterial ribosomal protein bS18 family. As to quaternary structure, part of the 30S ribosomal subunit. Forms a tight heterodimer with protein bS6.

Its function is as follows. Binds as a heterodimer with protein bS6 to the central domain of the 16S rRNA, where it helps stabilize the platform of the 30S subunit. This is Small ribosomal subunit protein bS18 from Parabacteroides distasonis (strain ATCC 8503 / DSM 20701 / CIP 104284 / JCM 5825 / NCTC 11152).